The primary structure comprises 819 residues: Capsid-associated protein Vp91 (819 aa).

Residues 1 to 18 (MSDVVLLVLAIILITIFT) form the signal peptide. A C2HC BV-type zinc finger spans residues 147–196 (CVPVDPCAGRAPGRYPMDERLLDTLVHNQPSDKDYSAGEHLHHPTLYLRC). 2 cysteine pairs are disulfide-bonded: C207/C220 and C260/C273. N210 is a glycosylation site (N-linked (GlcNAc...) asparagine; by host). The Chitin-binding type-2 domain occupies 223–281 (NELCEGRPDGFVLAYFPETLRVNEFVECRGGKHVVARCPDQQVFDRALMTCVQTHPCAF). N588 and N609 each carry an N-linked (GlcNAc...) asparagine; by host glycan. The segment at 650 to 671 (GDGDHWAPEAPPTQPEAPPAPE) is disordered. The segment covering 658-671 (EAPPTQPEAPPAPE) has biased composition (pro residues). N752 carries an N-linked (GlcNAc...) asparagine; by host glycan.

The protein localises to the virion. In terms of biological role, probable capsid-associated protein. The polypeptide is Capsid-associated protein Vp91 (p91) (Orgyia pseudotsugata (Douglas-fir tussock moth)).